The chain runs to 197 residues: MSLKNSLVIYGGSFNPPHNGHIIIAQLVREMFRFADFHVVTSSTPPHKKVDVSFKERFFLTKKAFEKVEGITVSDIEHRLGGVSYAINTIEYYEKKYSHIFFLVGEDALYSIEKWYRYEDILKKAHMLVYPRFKDELVYKKVERVLESLSNSIYILKLPLIQISSTVVRERAIKGLSLYGFVPQHIISYVEEIYGNR.

The protein belongs to the NadD family.

The catalysed reaction is nicotinate beta-D-ribonucleotide + ATP + H(+) = deamido-NAD(+) + diphosphate. It participates in cofactor biosynthesis; NAD(+) biosynthesis; deamido-NAD(+) from nicotinate D-ribonucleotide: step 1/1. Its function is as follows. Catalyzes the reversible adenylation of nicotinate mononucleotide (NaMN) to nicotinic acid adenine dinucleotide (NaAD). This is Probable nicotinate-nucleotide adenylyltransferase from Thermosipho melanesiensis (strain DSM 12029 / CIP 104789 / BI429).